The sequence spans 154 residues: NADPH-dependent 7-cyano-7-deazaguanine reductase (154 aa).

A compositionally biased stretch (polar residues) spans 1-23; that stretch reads MPNTDVSSLSMLGQQTETAQSPE. The tract at residues 1 to 26 is disordered; the sequence is MPNTDVSSLSMLGQQTETAQSPEQAV. The Thioimide intermediate role is filled by Cys-52. Catalysis depends on Asp-59, which acts as the Proton donor. Substrate is bound by residues 74 to 76 and 93 to 94; these read VES and HE.

The protein belongs to the GTP cyclohydrolase I family. QueF type 1 subfamily.

It is found in the cytoplasm. It catalyses the reaction 7-aminomethyl-7-carbaguanine + 2 NADP(+) = 7-cyano-7-deazaguanine + 2 NADPH + 3 H(+). The protein operates within tRNA modification; tRNA-queuosine biosynthesis. Functionally, catalyzes the NADPH-dependent reduction of 7-cyano-7-deazaguanine (preQ0) to 7-aminomethyl-7-deazaguanine (preQ1). This Rhizobium leguminosarum bv. trifolii (strain WSM2304) protein is NADPH-dependent 7-cyano-7-deazaguanine reductase.